The following is a 31-amino-acid chain: Maltose/maltodextrin import ATP-binding protein MalK (31 aa).

The protein belongs to the ABC transporter superfamily. Maltooligosaccharide importer (TC 3.A.1.1.1) family. In terms of assembly, the complex is composed of two ATP-binding proteins (MalK), two transmembrane proteins (MalG and MalK) and a solute-binding protein (MalE).

Its subcellular location is the cell inner membrane. The enzyme catalyses D-maltose(out) + ATP + H2O = D-maltose(in) + ADP + phosphate + H(+). Part of the ABC transporter complex MalEFGK involved in maltose/maltodextrin import. Responsible for energy coupling to the transport system. The protein is Maltose/maltodextrin import ATP-binding protein MalK of Photorhabdus luminescens (Xenorhabdus luminescens).